Here is a 456-residue protein sequence, read N- to C-terminus: Chromosomal replication initiator protein DnaA 1 (456 aa).

The tract at residues 1-68 (MRAWEEFLLL…KANLINNNGK (68 aa)) is domain I, interacts with DnaA modulators. The tract at residues 68 to 101 (KPIRVRVTSLDKSTPFKESQIQQEKTAYFTMQYG) is domain II. The domain III, AAA+ region stretch occupies residues 102–320 (DIDPQMSFAN…HALTTLAKRV (219 aa)). Residues S150, G152, K153, and T154 each contribute to the ATP site. Residues 321 to 456 (AYKKLSHQLL…AYQSLDLIVD (136 aa)) form a domain IV, binds dsDNA region.

This sequence belongs to the DnaA family. In terms of assembly, oligomerizes as a right-handed, spiral filament on DNA at oriC.

It is found in the cytoplasm. Functionally, plays an essential role in the initiation and regulation of chromosomal replication. ATP-DnaA binds to the origin of replication (oriC) to initiate formation of the DNA replication initiation complex once per cell cycle. Binds the DnaA box (a 9 base pair repeat at the origin) and separates the double-stranded (ds)DNA. Forms a right-handed helical filament on oriC DNA; dsDNA binds to the exterior of the filament while single-stranded (ss)DNA is stabiized in the filament's interior. The ATP-DnaA-oriC complex binds and stabilizes one strand of the AT-rich DNA unwinding element (DUE), permitting loading of DNA polymerase. After initiation quickly degrades to an ADP-DnaA complex that is not apt for DNA replication. Binds acidic phospholipids. The polypeptide is Chromosomal replication initiator protein DnaA 1 (Chlamydia muridarum (strain MoPn / Nigg)).